Reading from the N-terminus, the 317-residue chain is MTCKIIGCGGYLPSKIVSNDELAKFVDTNDAWIRTRTGITQRHIAGDTEYTSHLALESAEKAIADAGISVNDIDLIITCTTTPDNSFPSVASKLQGYLGLTNIPSFDLQAVCAGFVYGLQVANSLISSGKYKTILLIGAEKMTSLLDWNDRTTCVLFGDGAGSVILQRSRDDSGLIDSNIFSSGADYEILYTNGGVSMNGISGKIVMQGQKLFRHAIEKMQQSIKDLLHANQFSVSDIDYFIPHQANIRIINKLAELLNIEEHKVVKTVEKHANCSAASIPLALSTLKASGKIKKGDILLFSAIGAGLTWGSAFIRW.

Active-site residues include cysteine 112 and histidine 244. An ACP-binding region spans residues 245 to 249; that stretch reads QANIR. Asparagine 274 is a catalytic residue.

The protein belongs to the thiolase-like superfamily. FabH family. Homodimer.

The protein localises to the cytoplasm. It catalyses the reaction malonyl-[ACP] + acetyl-CoA + H(+) = 3-oxobutanoyl-[ACP] + CO2 + CoA. The protein operates within lipid metabolism; fatty acid biosynthesis. In terms of biological role, catalyzes the condensation reaction of fatty acid synthesis by the addition to an acyl acceptor of two carbons from malonyl-ACP. Catalyzes the first condensation reaction which initiates fatty acid synthesis and may therefore play a role in governing the total rate of fatty acid production. Possesses both acetoacetyl-ACP synthase and acetyl transacylase activities. Its substrate specificity determines the biosynthesis of branched-chain and/or straight-chain of fatty acids. The sequence is that of Beta-ketoacyl-[acyl-carrier-protein] synthase III from Rickettsia massiliae (strain Mtu5).